A 66-amino-acid chain; its full sequence is Putative ankyrin repeat protein RF_pd14 (66 aa).

An ANK repeat occupies 14–66 (KLNQKLMRAAATGDIEAVQKLVLRGADIYCRDHQGDTALSLAAGSGYLDILDI).

This is Putative ankyrin repeat protein RF_pd14 from Rickettsia felis (strain ATCC VR-1525 / URRWXCal2) (Rickettsia azadi).